The sequence spans 292 residues: MGMPNKGVVLLDGQALAYNIEEDLKYKIQAINTQTHKRPKLAVILVGKDPASITYVNMKIKACERVGMDFDLKTLQENITEAQLLSLIKDYNNNQNISGVLVQLPLPRHIDSKMISEAIDPNKDVDGFHPLNIGKLCTQKESFLPATPMGVMRLLEHYHIGIKGKDVAIIGASNIIGKPLSMLMLNAGASVSVCHILTKDINFYTQNADIVCVGVGKPDLIKASMLKKGAVVVDIGINHLNDGRIVGDVDFTNAQKVASFITPVPKGVGPMTIVSLLENTLIAFEKQQRKGF.

NADP(+) contacts are provided by residues 171–173 (GAS), Ile196, and Ile237.

This sequence belongs to the tetrahydrofolate dehydrogenase/cyclohydrolase family. In terms of assembly, homodimer.

It carries out the reaction (6R)-5,10-methylene-5,6,7,8-tetrahydrofolate + NADP(+) = (6R)-5,10-methenyltetrahydrofolate + NADPH. The enzyme catalyses (6R)-5,10-methenyltetrahydrofolate + H2O = (6R)-10-formyltetrahydrofolate + H(+). It functions in the pathway one-carbon metabolism; tetrahydrofolate interconversion. Catalyzes the oxidation of 5,10-methylenetetrahydrofolate to 5,10-methenyltetrahydrofolate and then the hydrolysis of 5,10-methenyltetrahydrofolate to 10-formyltetrahydrofolate. The polypeptide is Bifunctional protein FolD (Helicobacter acinonychis (strain Sheeba)).